The following is a 600-amino-acid chain: Kynurenine 3-monooxygenase (600 aa).

The tract at residues 217 to 242 is disordered; it reads GDSCADEPSGCGGRKQATTKSQGSEY.

This sequence belongs to the aromatic-ring hydroxylase family. KMO subfamily. The cofactor is FAD.

The protein resides in the mitochondrion outer membrane. It carries out the reaction L-kynurenine + NADPH + O2 + H(+) = 3-hydroxy-L-kynurenine + NADP(+) + H2O. It functions in the pathway cofactor biosynthesis; NAD(+) biosynthesis; quinolinate from L-kynurenine: step 1/3. Its function is as follows. Catalyzes the hydroxylation of L-kynurenine (L-Kyn) to form 3-hydroxy-L-kynurenine (L-3OHKyn). Required for synthesis of quinolinic acid. The sequence is that of Kynurenine 3-monooxygenase from Mycosarcoma maydis (Corn smut fungus).